We begin with the raw amino-acid sequence, 486 residues long: Glycogen synthase 2 (486 aa).

Lys15 provides a ligand contact to ADP-alpha-D-glucose.

It belongs to the glycosyltransferase 1 family. Bacterial/plant glycogen synthase subfamily.

The catalysed reaction is [(1-&gt;4)-alpha-D-glucosyl](n) + ADP-alpha-D-glucose = [(1-&gt;4)-alpha-D-glucosyl](n+1) + ADP + H(+). It functions in the pathway glycan biosynthesis; glycogen biosynthesis. Functionally, synthesizes alpha-1,4-glucan chains using ADP-glucose. In Rhizobium meliloti (strain 1021) (Ensifer meliloti), this protein is Glycogen synthase 2 (glgA2).